We begin with the raw amino-acid sequence, 132 residues long: MSKTLNIIWQYLRAFVLIYACLYAGIFIASLLPVTIPGSIIGMLILFVLLALQILPAKWVNPGCYVLIRYMALLFVPIGVGVMQYFDLLRAQFGPVVVSCAISTLVVFLVVSWSSQLVHGERKVVGQKGSEE.

Residues 1 to 6 lie on the Periplasmic side of the membrane; it reads MSKTLN. Residues 7–27 form a helical membrane-spanning segment; it reads IIWQYLRAFVLIYACLYAGIF. Over 28 to 30 the chain is Cytoplasmic; it reads IAS. A helical membrane pass occupies residues 31 to 51; sequence LLPVTIPGSIIGMLILFVLLA. Topologically, residues 52–62 are periplasmic; the sequence is LQILPAKWVNP. The chain crosses the membrane as a helical span at residues 63–83; the sequence is GCYVLIRYMALLFVPIGVGVM. Over 84 to 92 the chain is Cytoplasmic; sequence QYFDLLRAQ. Residues 93-113 form a helical membrane-spanning segment; sequence FGPVVVSCAISTLVVFLVVSW. Residues 114-132 are Periplasmic-facing; it reads SSQLVHGERKVVGQKGSEE.

The protein belongs to the UPF0299 family.

The protein resides in the cell inner membrane. In Escherichia coli O157:H7, this protein is UPF0299 membrane protein YohJ (yohJ).